The primary structure comprises 275 residues: 3-methyl-2-oxobutanoate hydroxymethyltransferase (275 aa).

2 residues coordinate Mg(2+): aspartate 49 and aspartate 88. Residues 49 to 50, aspartate 88, and lysine 118 each bind 3-methyl-2-oxobutanoate; that span reads DS. A Mg(2+)-binding site is contributed by glutamate 120. The active-site Proton acceptor is glutamate 187.

This sequence belongs to the PanB family. In terms of assembly, homodecamer; pentamer of dimers. Requires Mg(2+) as cofactor.

The protein localises to the cytoplasm. The catalysed reaction is 3-methyl-2-oxobutanoate + (6R)-5,10-methylene-5,6,7,8-tetrahydrofolate + H2O = 2-dehydropantoate + (6S)-5,6,7,8-tetrahydrofolate. It participates in cofactor biosynthesis; (R)-pantothenate biosynthesis; (R)-pantoate from 3-methyl-2-oxobutanoate: step 1/2. In terms of biological role, catalyzes the reversible reaction in which hydroxymethyl group from 5,10-methylenetetrahydrofolate is transferred onto alpha-ketoisovalerate to form ketopantoate. The sequence is that of 3-methyl-2-oxobutanoate hydroxymethyltransferase from Bartonella henselae (strain ATCC 49882 / DSM 28221 / CCUG 30454 / Houston 1) (Rochalimaea henselae).